A 173-amino-acid polypeptide reads, in one-letter code: Placenta-specific protein 1 (173 aa).

An N-terminal signal peptide occupies residues 1–23; that stretch reads MKLIKFLGGVVFFTLMFSGYSEQ.

It belongs to the PLAC1 family.

It localises to the secreted. Its function is as follows. May play a role in placental development. The polypeptide is Placenta-specific protein 1 (Rattus norvegicus (Rat)).